A 223-amino-acid polypeptide reads, in one-letter code: MNIAKLIDHTILKANTTKEDVMKVIEEAKEYKFASVCINPTWVKLAAEELAGHDVDVCTVIGFPLGASTTETKAFETKDAIAKGATEVDMVINVGALKDGDNELVEKDIYEVVQAAKGKALVKVIIETCLLTDEEKVRACELSVKAGADFVKTSTGFSTGGATAEDIALMRKTVGPNVGVKASGGVRTREDAEKMVAAGASRVGASASVAIVLNDAKGATDNY.

Asp-89 acts as the Proton donor/acceptor in catalysis. Lys-152 serves as the catalytic Schiff-base intermediate with acetaldehyde. The active-site Proton donor/acceptor is Lys-181.

This sequence belongs to the DeoC/FbaB aldolase family. DeoC type 1 subfamily.

Its subcellular location is the cytoplasm. It carries out the reaction 2-deoxy-D-ribose 5-phosphate = D-glyceraldehyde 3-phosphate + acetaldehyde. Its pathway is carbohydrate degradation; 2-deoxy-D-ribose 1-phosphate degradation; D-glyceraldehyde 3-phosphate and acetaldehyde from 2-deoxy-alpha-D-ribose 1-phosphate: step 2/2. Functionally, catalyzes a reversible aldol reaction between acetaldehyde and D-glyceraldehyde 3-phosphate to generate 2-deoxy-D-ribose 5-phosphate. The polypeptide is Deoxyribose-phosphate aldolase (Bacillus cereus (strain ZK / E33L)).